The following is a 438-amino-acid chain: MQVTVEKKEGIHCSLLIEVPANEVDSIVTKEINKTAKTIKMDGFRPGKVPAGMVEKKYGEQIRMEVISDLIPQKYSKAIQDEKLAVAGIEVELKENKKGEPLKFVANLELFPEFEVTGFEKIEVQKPVVELTDKEVKQMIENLRKQLATFSEVERAVQKDDKVVIDFVGKRDGEVFEGGSANDQELVIGSGQMIPGFEDGIIGMNKDEQRTITVTFPEDYQNKDLAGKEATFDITVKKIQEAQLPEVDDEFVAKFGVKGGVDTFEDEIKENMQRELKFILQRKVKDQVFKGLREIAEFETPKALIKREIDAAKQNLVKQMGGGQNFDVNQLPDNLFEANAKQKVETSLILDSIIESQKFQAEDAEVESLLDELVQAYEEPEKTKEQIKKNDREISNLKGLVIENKLTDWVLSQAQVTEKQEDFFEVIKENMQAQQAGF.

The region spanning 160–245 (DDKVVIDFVG…VKKIQEAQLP (86 aa)) is the PPIase FKBP-type domain.

The protein belongs to the FKBP-type PPIase family. Tig subfamily.

The protein localises to the cytoplasm. The catalysed reaction is [protein]-peptidylproline (omega=180) = [protein]-peptidylproline (omega=0). Its function is as follows. Involved in protein export. Acts as a chaperone by maintaining the newly synthesized protein in an open conformation. Functions as a peptidyl-prolyl cis-trans isomerase. This chain is Trigger factor, found in Francisella philomiragia subsp. philomiragia (strain ATCC 25017 / CCUG 19701 / FSC 153 / O#319-036).